The primary structure comprises 148 residues: Large ribosomal subunit protein bL9 (148 aa).

It belongs to the bacterial ribosomal protein bL9 family.

Binds to the 23S rRNA. This Frankia casuarinae (strain DSM 45818 / CECT 9043 / HFP020203 / CcI3) protein is Large ribosomal subunit protein bL9.